The chain runs to 84 residues: Putative defensin-like protein 165 (84 aa).

A signal peptide spans 1–27 (MSTKLFSYFMLLVVLFSVLTIIPKTEA). 4 cysteine pairs are disulfide-bonded: C31/C78, C41/C60, C46/C72, and C50/C74.

Belongs to the DEFL family.

Its subcellular location is the secreted. This Arabidopsis thaliana (Mouse-ear cress) protein is Putative defensin-like protein 165 (LCR12).